Consider the following 525-residue polypeptide: GMP synthase [glutamine-hydrolyzing] (525 aa).

The Glutamine amidotransferase type-1 domain maps to 9–202; it reads SILIIDFGSQ…VHKIVGLKSD (194 aa). Residue Cys-86 is the Nucleophile of the active site. Catalysis depends on residues His-176 and Glu-178. Residues 203–400 form the GMPS ATP-PPase domain; sequence WTMAAYRAEM…LGLPESFIGR (198 aa). 230-236 is an ATP binding site; it reads SGGVDSS.

As to quaternary structure, homodimer.

The enzyme catalyses XMP + L-glutamine + ATP + H2O = GMP + L-glutamate + AMP + diphosphate + 2 H(+). Its pathway is purine metabolism; GMP biosynthesis; GMP from XMP (L-Gln route): step 1/1. Catalyzes the synthesis of GMP from XMP. In Agrobacterium fabrum (strain C58 / ATCC 33970) (Agrobacterium tumefaciens (strain C58)), this protein is GMP synthase [glutamine-hydrolyzing].